The sequence spans 174 residues: CDP-archaeol synthase (174 aa).

Helical transmembrane passes span 14-34 (ILEA…PVVA), 59-79 (IEGL…AALA), 83-103 (MLLA…DMAG), 118-138 (APLL…IALG), and 149-169 (AAAA…LLGL).

It belongs to the CDP-archaeol synthase family. Mg(2+) is required as a cofactor.

It is found in the cell membrane. The catalysed reaction is 2,3-bis-O-(geranylgeranyl)-sn-glycerol 1-phosphate + CTP + H(+) = CDP-2,3-bis-O-(geranylgeranyl)-sn-glycerol + diphosphate. The protein operates within membrane lipid metabolism; glycerophospholipid metabolism. Functionally, catalyzes the formation of CDP-2,3-bis-(O-geranylgeranyl)-sn-glycerol (CDP-archaeol) from 2,3-bis-(O-geranylgeranyl)-sn-glycerol 1-phosphate (DGGGP) and CTP. This reaction is the third ether-bond-formation step in the biosynthesis of archaeal membrane lipids. In Aeropyrum pernix (strain ATCC 700893 / DSM 11879 / JCM 9820 / NBRC 100138 / K1), this protein is CDP-archaeol synthase.